A 625-amino-acid chain; its full sequence is ATP-dependent rRNA helicase spb4 (625 aa).

A Q motif motif is present at residues 14–42 (WDALTPSLAEWILDAIKSMGFEKMTPVQA). The Helicase ATP-binding domain occupies 45 to 246 (IPLFMGNKDV…RVGLRNPVKI (202 aa)). 58–65 (AVTGSGKT) contacts ATP. Residues 194-197 (DEAD) carry the DEAD box motif. The region spanning 278 to 436 (ALLSLLSQLQ…TTDDAAKILI (159 aa)) is the Helicase C-terminal domain. Residues 550-597 (KKQREAWSQKHEKQDLKELKREKKKRKREIERLDKMTDEEKRVEQEKE) form a disordered region. Composition is skewed to basic and acidic residues over residues 553 to 570 (REAW…ELKR) and 577 to 597 (REIE…QEKE). Positions 557 to 614 (SQKHEKQDLKELKREKKKRKREIERLDKMTDEEKRVEQEKERELQALIEQVKRRKIED) form a coiled coil.

The protein belongs to the DEAD box helicase family. DDX55/SPB4 subfamily. In terms of assembly, component of pre-60S ribosomal complexes.

Its subcellular location is the nucleus. The protein resides in the nucleolus. The catalysed reaction is ATP + H2O = ADP + phosphate + H(+). Functionally, ATP-binding RNA helicase involved in the biogenesis of 60S ribosomal subunits. Binds 90S pre-ribosomal particles and dissociates from pre-60S ribosomal particles after processing of 27SB pre-rRNA. Required for the normal formation of 18S rRNA through the processing of pre-rRNAs at sites A0, A1 and A2, and the normal formation of 25S and 5.8S rRNAs through the processing of pre-rRNAs at sites C1 and C2. The protein is ATP-dependent rRNA helicase spb4 of Sclerotinia sclerotiorum (strain ATCC 18683 / 1980 / Ss-1) (White mold).